Consider the following 1294-residue polypeptide: uncharacterized protein (1294 aa).

This is an uncharacterized protein from Schizosaccharomyces pombe (strain 972 / ATCC 24843) (Fission yeast).